The sequence spans 119 residues: Non-specific lipid-transfer protein 3 (119 aa).

An N-terminal signal peptide occupies residues 1–24; it reads MARSMKLACVVLAMCMLVAPMAEA. Disulfide bonds link Cys-28–Cys-77, Cys-38–Cys-54, Cys-55–Cys-100, and Cys-75–Cys-114.

This sequence belongs to the plant LTP family. In terms of tissue distribution, expressed in roots, stem, leaves and tendrils of the mature plant.

Plant non-specific lipid-transfer proteins transfer phospholipids as well as galactolipids across membranes. May play a role in wax or cutin deposition in the cell walls of expanding epidermal cells and certain secretory tissues. In Pisum sativum (Garden pea), this protein is Non-specific lipid-transfer protein 3.